Reading from the N-terminus, the 226-residue chain is UPF0758 protein Sca_1264 (226 aa).

Residues 102-224 enclose the MPN domain; that stretch reads KITSPQDAAD…YLSMVEGGYF (123 aa). Histidine 173, histidine 175, and aspartate 186 together coordinate Zn(2+). The short motif at 173–186 is the JAMM motif element; it reads HNHPSGDVTPSKED.

This sequence belongs to the UPF0758 family.

This is UPF0758 protein Sca_1264 from Staphylococcus carnosus (strain TM300).